A 148-amino-acid polypeptide reads, in one-letter code: Transcriptional regulator MraZ (148 aa).

SpoVT-AbrB domains lie at 5 to 53 (ETAI…VEKE) and 82 to 125 (SALL…SEQA).

Belongs to the MraZ family. In terms of assembly, forms oligomers.

It localises to the cytoplasm. Its subcellular location is the nucleoid. This is Transcriptional regulator MraZ from Xylella fastidiosa (strain 9a5c).